A 406-amino-acid polypeptide reads, in one-letter code: Biofilm regulatory protein A (406 aa).

The N-terminal stretch at 1–26 is a signal peptide; sequence MKIGKKILIMLVTIFLTSLVALGVYA. A compositionally biased stretch (low complexity) spans 347–397; sequence SSSASDYSSSGNYSGSSSDYGSSSSYGSNSSSGSSSDYSGQNSYNQGNYQQ. Positions 347–406 are disordered; the sequence is SSSASDYSSSGNYSGSSSDYGSSSSYGSNSSSGSSSDYSGQNSYNQGNYQQPAAGTGIGN.

Belongs to the LytR/CpsA/Psr (LCP) family.

Its subcellular location is the cell envelope. Its function is as follows. Involved in biofilm formation, cell division, autolysis and the regulation of acid and oxidative stress tolerance. May be associated with systemic virulence in blood. In Streptococcus mutans serotype c (strain ATCC 700610 / UA159), this protein is Biofilm regulatory protein A (brpA).